The following is a 453-amino-acid chain: tRNA modification GTPase MnmE (453 aa).

Residues R22, E79, and K119 each contribute to the (6S)-5-formyl-5,6,7,8-tetrahydrofolate site. The TrmE-type G domain maps to 215–376 (GMKVVIAGRP…LQQHLKSLMG (162 aa)). N225 serves as a coordination point for K(+). Residues 225–230 (NAGKSS), 244–250 (TEIAGTT), 269–272 (DTAG), and 334–337 (NKAD) contribute to the GTP site. Residue S229 participates in Mg(2+) binding. Residues T244, I246, and T249 each coordinate K(+). T250 provides a ligand contact to Mg(2+). Position 453 (K453) interacts with (6S)-5-formyl-5,6,7,8-tetrahydrofolate.

It belongs to the TRAFAC class TrmE-Era-EngA-EngB-Septin-like GTPase superfamily. TrmE GTPase family. As to quaternary structure, homodimer. Heterotetramer of two MnmE and two MnmG subunits. Requires K(+) as cofactor.

The protein resides in the cytoplasm. Its function is as follows. Exhibits a very high intrinsic GTPase hydrolysis rate. Involved in the addition of a carboxymethylaminomethyl (cmnm) group at the wobble position (U34) of certain tRNAs, forming tRNA-cmnm(5)s(2)U34. The protein is tRNA modification GTPase MnmE of Shewanella sediminis (strain HAW-EB3).